Here is a 720-residue protein sequence, read N- to C-terminus: NAD(P)H-quinone oxidoreductase subunit 5, chloroplastic (720 aa).

The next 16 membrane-spanning stretches (helical) occupy residues 9 to 29 (WIVP…LLFF), 39 to 59 (IWAI…FNIL), 87 to 107 (FLID…GVLV), 125 to 145 (FAYL…PNLI), 147 to 167 (IYIF…FWFT), 189 to 209 (LLLG…EILF), 221 to 239 (VNLY…GPIA), 258 to 278 (TPIS…FLVA), 286 to 306 (LLPF…FLGA), 327 to 347 (LGYM…FHLI), 354 to 374 (ALLF…VGYS), 395 to 415 (GITF…ACFW), 434 to 454 (ISLV…FLTF), 530 to 550 (LFPL…GAPF), 590 to 610 (LSVV…FSLF), and 700 to 720 (LFGL…GAMF).

Belongs to the complex I subunit 5 family. NDH is composed of at least 16 different subunits, 5 of which are encoded in the nucleus.

It localises to the plastid. It is found in the chloroplast thylakoid membrane. The enzyme catalyses a plastoquinone + NADH + (n+1) H(+)(in) = a plastoquinol + NAD(+) + n H(+)(out). The catalysed reaction is a plastoquinone + NADPH + (n+1) H(+)(in) = a plastoquinol + NADP(+) + n H(+)(out). Functionally, NDH shuttles electrons from NAD(P)H:plastoquinone, via FMN and iron-sulfur (Fe-S) centers, to quinones in the photosynthetic chain and possibly in a chloroplast respiratory chain. The immediate electron acceptor for the enzyme in this species is believed to be plastoquinone. Couples the redox reaction to proton translocation, and thus conserves the redox energy in a proton gradient. This is NAD(P)H-quinone oxidoreductase subunit 5, chloroplastic (ndhF) from Physcomitrium patens (Spreading-leaved earth moss).